Consider the following 1307-residue polypeptide: Cyclic nucleotide-gated channel beta-1 (1307 aa).

Disordered stretches follow at residues 1–101 (MLGW…AQVA), 126–178 (QPVY…TEPS), 193–262 (LPQP…PGDP), 320–458 (DSCW…LDSC), 470–625 (LERA…SQNS), and 648–681 (EKLIDPDVTSDEESPKPSPAKKAPDSAPAQKPAE). Topologically, residues 1-720 (MLGWVQRVLP…SIDPLTNLMY (720 aa)) are cytoplasmic. Over residues 43 to 59 (VQPEPEPEPEPAPEEAA) the composition is skewed to acidic residues. The span at 165-174 (GSDKTSKTQD) shows a compositional bias: basic and acidic residues. The span at 361–386 (QEEEEEEKEEKEEKEEEEEKEEEEKR) shows a compositional bias: acidic residues. Residues 387–406 (EEEKKKEKEEEKKEKEKEEK) are compositionally biased toward basic and acidic residues. 2 stretches are compositionally biased toward acidic residues: residues 407-451 (EEKE…EEEP) and 483-518 (LPEEEEEKEEEKKEEEEEKEEEEEKEEEEEKEEEGE). The span at 550–560 (TIPPPERPPVS) shows a compositional bias: pro residues. Residues 621–631 (ASQNSAIINDR) form a calmodulin-binding CaM1 region. The chain crosses the membrane as a helical span at residues 721–742 (ILWLFFVVLAWNWNCWLIPVRW). Topologically, residues 743 to 751 (AFPYQRADN) are extracellular. The chain crosses the membrane as a helical span at residues 752–773 (IHLWLLMDYLCDFIYLLDITVF). Residues 774–788 (QMRLQFVKGGDIITD) lie on the Cytoplasmic side of the membrane. The chain crosses the membrane as a helical span at residues 789–808 (KKEMRNNYLKSQRFKMDLLC). Over 809-824 (LLPLDFLYLKLGVNPL) the chain is Extracellular. The helical transmembrane segment at 825 to 837 (LRLPRCLKYMAFF) threads the bilayer. The Cytoplasmic portion of the chain corresponds to 838-849 (EFNNRLEAILSK). A helical membrane pass occupies residues 850–872 (AYVYRVIRTTAYLLYSLHLNSCL). Residues 850–949 (AYVYRVIRTT…IGQMRDVVGA (100 aa)) are ion conduction pathway. Over 873–895 (YYWASAFQGIGSTHWVYDGVGNS) the chain is Extracellular. The next 2 helical transmembrane spans lie at 896 to 922 (YIRCYYWAVKTLITIGGLPDPQTLFEI) and 923 to 948 (VFQLLNYFTGVFAFSVMIGQMRDVVG). Residues 949-1307 (AATAGQTYYR…MLEEKKEEVE (359 aa)) are Cytoplasmic-facing. The C-linker stretch occupies residues 952-1028 (AGQTYYRSCM…NIVSKVALFQ (77 aa)). Residues 1026–1130 (LFQGCDRQMI…LDKKDLNEIL (105 aa)) are cNMP-binding domain. Residues 1032–1148 (RQMIFDMLKR…LLRKKARRML (117 aa)) form a cyclic nucleotide-binding domain region. 3',5'-cyclic GMP contacts are provided by Gly1093, Glu1094, Ser1096, Arg1106, and Thr1107. Residue Arg1106 participates in 3',5'-cyclic AMP binding. The calmodulin-binding CaM2 stretch occupies residues 1212 to 1218 (QQQLLEQ). Over residues 1214–1238 (QLLEQAKSSQEAGGEEGSGATDQPA) the composition is skewed to low complexity. Positions 1214 to 1307 (QLLEQAKSSQ…MLEEKKEEVE (94 aa)) are disordered. Residues 1250-1261 (EPPAPSSPPPAS) are compositionally biased toward pro residues.

It belongs to the cyclic nucleotide-gated cation channel (TC 1.A.1.5) family. CNGB1 subfamily. As to quaternary structure, the rod cyclic nucleotide-gated channel is a heterotetramer composed of CNGA1 and CNGB1 subunits with 3:1 stoichiometry. CNGA1:CNGB1 channel binds Ca(2+)-bound CALM1 via CaM1 and CaM2 regions of the CNGB1 subunit; this interaction modulates the affinity of the channel for cNMPs in response to intracellular Ca(2+) levels. The olfactory cyclic nucleotide-gated channel is a heterotetramer composed of CNGA2, CNGA4 and CNGB1b subunits with 2:1:1 stoichiometry. In terms of tissue distribution, expressed in olfactory sensory cilia (at protein level).

The protein localises to the cell projection. It is found in the cilium membrane. The enzyme catalyses Ca(2+)(in) = Ca(2+)(out). It catalyses the reaction Na(+)(in) = Na(+)(out). The catalysed reaction is K(+)(in) = K(+)(out). It carries out the reaction NH4(+)(in) = NH4(+)(out). The enzyme catalyses Rb(+)(in) = Rb(+)(out). It catalyses the reaction Li(+)(in) = Li(+)(out). The catalysed reaction is Cs(+)(in) = Cs(+)(out). Functionally, pore-forming subunit of the rod cyclic nucleotide-gated channel. Mediates rod photoresponses at dim light converting transient changes in intracellular cGMP levels into electrical signals. In the dark, cGMP levels are high and keep the channel open enabling a steady inward current carried by Na(+) and Ca(2+) ions that leads to membrane depolarization and neurotransmitter release from synaptic terminals. Upon photon absorption cGMP levels decline leading to channel closure and membrane hyperpolarization that ultimately slows neurotransmitter release and signals the presence of light, the end point of the phototransduction cascade. Conducts cGMP- and cAMP-gated ion currents, with permeability for monovalent and divalent cations. The selectivity for Ca(2+) over Na(+) increases with cGMP concentrations, whereas the selectivity among monovalent ions is independent of the cGMP levels. Its function is as follows. Pore-forming subunit of the olfactory cyclic nucleotide-gated channel. Operates in the cilia of olfactory sensory neurons where chemical stimulation of the odorant is converted to an electrical signal. Mediates odorant-induced cAMP-dependent Ca(2+) influx triggering neuron depolarization. The rise of intracellular Ca(2+) levels potentiates the olfactory response by activating Ca(2+)-dependent Cl(-) channels, but it also serves as a negative feedback signal to desensitize the channel for rapid adaptation to odorants. The polypeptide is Cyclic nucleotide-gated channel beta-1 (Rattus norvegicus (Rat)).